Reading from the N-terminus, the 360-residue chain is Phospho-N-acetylmuramoyl-pentapeptide-transferase (360 aa).

10 helical membrane-spanning segments follow: residues Arg-25 to Ile-45, Met-74 to Ala-94, Tyr-97 to Tyr-117, Trp-132 to Ala-152, Ile-168 to Ser-188, Gly-199 to Ser-219, Ser-236 to Phe-256, Val-263 to Ile-283, Val-288 to Val-308, and Val-338 to Lys-358.

The protein belongs to the glycosyltransferase 4 family. MraY subfamily. Mg(2+) is required as a cofactor.

Its subcellular location is the cell inner membrane. The catalysed reaction is UDP-N-acetyl-alpha-D-muramoyl-L-alanyl-gamma-D-glutamyl-meso-2,6-diaminopimeloyl-D-alanyl-D-alanine + di-trans,octa-cis-undecaprenyl phosphate = di-trans,octa-cis-undecaprenyl diphospho-N-acetyl-alpha-D-muramoyl-L-alanyl-D-glutamyl-meso-2,6-diaminopimeloyl-D-alanyl-D-alanine + UMP. Its pathway is cell wall biogenesis; peptidoglycan biosynthesis. In terms of biological role, catalyzes the initial step of the lipid cycle reactions in the biosynthesis of the cell wall peptidoglycan: transfers peptidoglycan precursor phospho-MurNAc-pentapeptide from UDP-MurNAc-pentapeptide onto the lipid carrier undecaprenyl phosphate, yielding undecaprenyl-pyrophosphoryl-MurNAc-pentapeptide, known as lipid I. This is Phospho-N-acetylmuramoyl-pentapeptide-transferase from Stutzerimonas stutzeri (strain A1501) (Pseudomonas stutzeri).